Reading from the N-terminus, the 147-residue chain is Leghemoglobin 8 (147 aa).

In terms of domain architecture, Globin spans 2 to 147; it reads GFTEKQESLV…LAASIKKSMS (146 aa). Nitrated tyrosine is present on residues Y25 and Y30. S45 contributes to the heme b binding site. Phosphoserine is present on S45. O2 is bound at residue H62. Residues K65, H94, and K97 each coordinate heme b. At Y135 the chain carries Nitrated tyrosine.

It belongs to the plant globin family. Monomer. Interacts with CAS31 in the cytoplasm; this interaction leads to its protection from denaturation under thermal and drought stresses. In terms of processing, nitrated in effective nodules and particularly in hypoxic conditions; this mechanism may play a protective role in the symbiosis by buffering toxic peroxynitrite NO(2)(-). Nitration level decrease during nodule senescence. Post-translationally, phosphorylation at Ser-45 disrupts the molecular environment of its porphyrin ring oxygen binding pocket, thus leading to a reduced oxygen consumption and to the delivery of oxygen O(2) to symbiosomes. Root nodules.

It is found in the cytoplasm. The protein resides in the nucleus. Leghemoglobin that reversibly binds oxygen O(2) through a pentacoordinated heme iron. In root nodules, facilitates the diffusion of oxygen to the bacteroids while preventing the bacterial nitrogenase from being inactivated by buffering dioxygen, nitric oxide and carbon monoxide, and promoting the formation of reactive oxygen species (ROS, e.g. H(2)O(2)). This role is essential for symbiotic nitrogen fixation (SNF). The protein is Leghemoglobin 8 of Medicago truncatula (Barrel medic).